Consider the following 221-residue polypeptide: Phosphoribosylformylglycinamidine synthase subunit PurQ (221 aa).

Positions 3-221 (AAVLVFPGSN…MFASLMQVMA (219 aa)) constitute a Glutamine amidotransferase type-1 domain. Catalysis depends on Cys-87, which acts as the Nucleophile. Active-site residues include His-195 and Glu-197.

As to quaternary structure, part of the FGAM synthase complex composed of 1 PurL, 1 PurQ and 2 PurS subunits.

The protein localises to the cytoplasm. The catalysed reaction is N(2)-formyl-N(1)-(5-phospho-beta-D-ribosyl)glycinamide + L-glutamine + ATP + H2O = 2-formamido-N(1)-(5-O-phospho-beta-D-ribosyl)acetamidine + L-glutamate + ADP + phosphate + H(+). It carries out the reaction L-glutamine + H2O = L-glutamate + NH4(+). It functions in the pathway purine metabolism; IMP biosynthesis via de novo pathway; 5-amino-1-(5-phospho-D-ribosyl)imidazole from N(2)-formyl-N(1)-(5-phospho-D-ribosyl)glycinamide: step 1/2. In terms of biological role, part of the phosphoribosylformylglycinamidine synthase complex involved in the purines biosynthetic pathway. Catalyzes the ATP-dependent conversion of formylglycinamide ribonucleotide (FGAR) and glutamine to yield formylglycinamidine ribonucleotide (FGAM) and glutamate. The FGAM synthase complex is composed of three subunits. PurQ produces an ammonia molecule by converting glutamine to glutamate. PurL transfers the ammonia molecule to FGAR to form FGAM in an ATP-dependent manner. PurS interacts with PurQ and PurL and is thought to assist in the transfer of the ammonia molecule from PurQ to PurL. In Zymomonas mobilis subsp. mobilis (strain ATCC 31821 / ZM4 / CP4), this protein is Phosphoribosylformylglycinamidine synthase subunit PurQ.